Here is a 185-residue protein sequence, read N- to C-terminus: Pycsar effector protein EcPycTM (185 aa).

A run of 3 helical transmembrane segments spans residues 32–52 (ALLLAVNGATATILSNKVGYF), 63–83 (MVIFFLLLFMISIFIFMSVLL), and 141–161 (FILSCIAKQKFLFFSSAVSWI).

The protein resides in the cell inner membrane. In terms of biological role, pycsar (pyrimidine cyclase system for antiphage resistance) provides immunity against bacteriophage. The pyrimidine cyclase (PycC) synthesizes cyclic nucleotides in response to infection; these serve as specific second messenger signals. The signals activate the adjacent effector, leading to bacterial cell death and abortive phage infection. A clade E Pycsar system. Its function is as follows. The effector component of a two-gene Pycsar system. Expression of this and adjacent cytidylate cyclase EcPycC (AC P0DV24) confers resistance to bacteriophage P1 and T5; this protein is required for resistance. When cells expressing the Pycsar system are infected by phage T5 at low multiplicity of infection (0.2 MOI) the culture survives, at 2.0 MOI bacteria enter growth arrest. The same cells enter growth arrest after exposure to 250 uM cCMP but not cUMP; this effector protein responds only to cCMP, usually produced by its cognate NTP cyclase. Some of the cells treated with cCMP have abnormal membrane protrusions, probably due to effects on membrane integrity. This chain is Pycsar effector protein EcPycTM, found in Escherichia coli.